Here is a 288-residue protein sequence, read N- to C-terminus: Bifunctional protein FolD (288 aa).

Residues Gly166–Ser168, Ser191, and Ile232 contribute to the NADP(+) site.

It belongs to the tetrahydrofolate dehydrogenase/cyclohydrolase family. In terms of assembly, homodimer.

The enzyme catalyses (6R)-5,10-methylene-5,6,7,8-tetrahydrofolate + NADP(+) = (6R)-5,10-methenyltetrahydrofolate + NADPH. It catalyses the reaction (6R)-5,10-methenyltetrahydrofolate + H2O = (6R)-10-formyltetrahydrofolate + H(+). It functions in the pathway one-carbon metabolism; tetrahydrofolate interconversion. Functionally, catalyzes the oxidation of 5,10-methylenetetrahydrofolate to 5,10-methenyltetrahydrofolate and then the hydrolysis of 5,10-methenyltetrahydrofolate to 10-formyltetrahydrofolate. The polypeptide is Bifunctional protein FolD (Rickettsia peacockii (strain Rustic)).